We begin with the raw amino-acid sequence, 1171 residues long: ATP-dependent helicase/deoxyribonuclease subunit B (1171 aa).

Residues 1 to 343 enclose the UvrD-like helicase ATP-binding domain; the sequence is MSLRFVIGRA…LVADENYRYR (343 aa). Position 8–15 (8–15) interacts with ATP; the sequence is GRAGSGKS. The UvrD-like helicase C-terminal domain maps to 281–587; sequence MEQPRFHSPA…QFANIPPSLD (307 aa). [4Fe-4S] cluster-binding residues include C805, C1129, C1132, and C1138.

This sequence belongs to the helicase family. AddB/RexB type 1 subfamily. Heterodimer of AddA and AddB. It depends on Mg(2+) as a cofactor. [4Fe-4S] cluster is required as a cofactor.

Functionally, the heterodimer acts as both an ATP-dependent DNA helicase and an ATP-dependent, dual-direction single-stranded exonuclease. Recognizes the chi site generating a DNA molecule suitable for the initiation of homologous recombination. The AddB subunit has 5' -&gt; 3' nuclease activity but not helicase activity. This is ATP-dependent helicase/deoxyribonuclease subunit B from Bacillus cereus (strain AH187).